We begin with the raw amino-acid sequence, 1238 residues long: Erythroid differentiation-related factor 1 (1238 aa).

Disordered regions lie at residues M1 to S38, Q220 to P268, P517 to S561, and K620 to P647. Low complexity-rich tracts occupy residues A9–S38, S223–E241, and S253–S263. The span at N530–E547 shows a compositional bias: acidic residues. TPR repeat units lie at residues S693–Y726 and A914–R953.

The protein resides in the nucleus. Transcription factor involved in erythroid differentiation. Involved in transcriptional activation of the globin gene. This Homo sapiens (Human) protein is Erythroid differentiation-related factor 1 (EDRF1).